A 492-amino-acid polypeptide reads, in one-letter code: Serine/threonine-protein kinase 3 (492 aa).

Residues Phe26 to Ile277 enclose the Protein kinase domain. Residues Leu32–Val40 and Lys55 each bind ATP. Asp145 (proton acceptor) is an active-site residue. Thr179 is modified (phosphothreonine; by autocatalysis). Coiled-coil stretches lie at residues Leu286–Lys328 and Asn443–Gln476. Over residues Lys297 to Glu307 the composition is skewed to basic and acidic residues. A disordered region spans residues Lys297–Ala339. The segment covering Leu308–Glu320 has biased composition (acidic residues). Residues Met326–Ala339 are compositionally biased toward polar residues. The SARAH domain maps to Phe438–Lys485.

The protein belongs to the protein kinase superfamily. STE Ser/Thr protein kinase family. STE20 subfamily. Homodimer; mediated via the coiled-coil region. Requires Mg(2+) as cofactor.

The protein resides in the cytoplasm. Its subcellular location is the nucleus. It carries out the reaction L-seryl-[protein] + ATP = O-phospho-L-seryl-[protein] + ADP + H(+). The catalysed reaction is L-threonyl-[protein] + ATP = O-phospho-L-threonyl-[protein] + ADP + H(+). Its activity is regulated as follows. Inhibited by the C-terminal non-catalytic region. Activated by caspase-cleavage. Full activation also requires homodimerization and autophosphorylation of Thr-179. Functionally, stress-activated, pro-apoptotic kinase which, following caspase-cleavage, enters the nucleus and induces chromatin condensation followed by internucleosomal DNA fragmentation. Key component of the Hippo signaling pathway which plays a pivotal role in organ size control and tumor suppression by restricting proliferation and promoting apoptosis. The core of this pathway is composed of a kinase cascade wherein stk3/mst2 and stk4/mst1, in complex with its regulatory protein sav1, phosphorylates and activates lats1/2 in complex with its regulatory protein mob1, which in turn phosphorylates and inactivates yap1 oncoprotein and wwtr1/taz. Phosphorylation of yap1 by lats2 inhibits its translocation into the nucleus to regulate cellular genes important for cell proliferation, cell death, and cell migration. This is Serine/threonine-protein kinase 3 (stk3) from Danio rerio (Zebrafish).